A 1530-amino-acid chain; its full sequence is Coiled-coil domain-containing protein 141 (1530 aa).

Residue T91 is modified to Phosphothreonine. Coiled coils occupy residues 642 to 706, 758 to 783, and 861 to 970; these read VKNE…EALM, VKEK…QDYE, and SNVS…KTSD. Residues 1210–1241 are disordered; that stretch reads SPDDISLPPLPGSPESPLAPSDMEVEEPVSSS. In terms of domain architecture, Ig-like spans 1409–1530; that stretch reads PNFSRLLSNV…VSLMYWLLTQ (122 aa).

As to quaternary structure, interacts with DISC1. Interacts preferentially with phosphorylated forms of myosin regulatory light chain (MRLC). Interacts (via the N-terminal region) with HDAC6; inhibits the deacetylase activity of HDAC6. Interacts with KIBRA (via the C-terminal region); retains AMPAR in the cytosol after internalization. Ubiquitinated and degradated by the CDC20-APC/C pathway. During brain development, CDC20-APC/C complex degrades CCDC141 after centrosome translocation into the dilated area. CCDC141 is restabilized in the dilation until the centrosome enters the dilation, at which point it is once again immediately destabilized by CDC20-APC/C complex. The oscillatory regulation of CCDC141 protein is needed for proper cortical migration. Post-translationally, phosphorylation at Thr-91 by PLK1 affects CCDC141 degradation.

The protein localises to the cytoplasm. The protein resides in the cytoskeleton. Its subcellular location is the microtubule organizing center. It localises to the centrosome. Its function is as follows. Plays a critical role in cortical radial and GnRH neurons migration during brain development. Regulates cortical radial migration by negatively controlling the activity of histone deacetylase 6 (HDAC6) and promotes centrosome maturation. CAMDI is required for dilation formation of cortical neurons during radial migration. Plays a critical role in learning and memory performance through regulation of AMPA-selective glutamate receptors (AMPARs) cell surface expression in competition with KIBRA. In Homo sapiens (Human), this protein is Coiled-coil domain-containing protein 141 (CCDC141).